The sequence spans 291 residues: Tetrahydromethanopterin:alpha-L-glutamate ligase (291 aa).

The ATP-grasp domain maps to 101-286 (SVFLELNNLP…IADKLLEKII (186 aa)). ATP contacts are provided by residues Lys-136, 175–187 (QEFIKPVRNEHRD), and Arg-203. Residues Asp-247, Glu-259, and Asn-261 each contribute to the Mg(2+) site. 3 residues coordinate Mn(2+): Asp-247, Glu-259, and Asn-261.

The protein belongs to the RimK family. MptN subfamily. Homodimer. Mg(2+) serves as cofactor. Mn(2+) is required as a cofactor.

The catalysed reaction is 5,6,7,8-tetrahydromethanopterin + L-glutamate + ATP = 5,6,7,8-tetrahydrosarcinapterin + ADP + phosphate + H(+). It participates in cofactor biosynthesis; 5,6,7,8-tetrahydrosarcinapterin biosynthesis. Catalyzes the ATP or GTP-dependent addition of one L-glutamate molecule to tetrahydromethanopterin, producing tetrahydrosarcinapterin. The sequence is that of Tetrahydromethanopterin:alpha-L-glutamate ligase (mptN) from Methanocaldococcus jannaschii (strain ATCC 43067 / DSM 2661 / JAL-1 / JCM 10045 / NBRC 100440) (Methanococcus jannaschii).